A 436-amino-acid polypeptide reads, in one-letter code: Trigger factor (436 aa).

One can recognise a PPIase FKBP-type domain in the interval 161-246 (GMRVTMDFIG…LIKVEEQILP (86 aa)).

Belongs to the FKBP-type PPIase family. Tig subfamily.

It localises to the cytoplasm. The catalysed reaction is [protein]-peptidylproline (omega=180) = [protein]-peptidylproline (omega=0). In terms of biological role, involved in protein export. Acts as a chaperone by maintaining the newly synthesized protein in an open conformation. Functions as a peptidyl-prolyl cis-trans isomerase. The protein is Trigger factor of Aeromonas salmonicida (strain A449).